We begin with the raw amino-acid sequence, 40 residues long: Photosystem II reaction center protein J (40 aa).

The chain crosses the membrane as a helical span at residues 8–28; it reads IPLWLISTVTGTLVIGLMGIF.

This sequence belongs to the PsbJ family. PSII is composed of 1 copy each of membrane proteins PsbA, PsbB, PsbC, PsbD, PsbE, PsbF, PsbH, PsbI, PsbJ, PsbK, PsbL, PsbM, PsbT, PsbX, PsbY, PsbZ, Psb30/Ycf12, at least 3 peripheral proteins of the oxygen-evolving complex and a large number of cofactors. It forms dimeric complexes.

It is found in the plastid. The protein localises to the chloroplast thylakoid membrane. One of the components of the core complex of photosystem II (PSII). PSII is a light-driven water:plastoquinone oxidoreductase that uses light energy to abstract electrons from H(2)O, generating O(2) and a proton gradient subsequently used for ATP formation. It consists of a core antenna complex that captures photons, and an electron transfer chain that converts photonic excitation into a charge separation. This is Photosystem II reaction center protein J from Ginkgo biloba (Ginkgo).